The sequence spans 457 residues: tRNA modification GTPase MnmE (457 aa).

Arginine 25, glutamate 87, and arginine 126 together coordinate (6S)-5-formyl-5,6,7,8-tetrahydrofolate. The TrmE-type G domain maps to 223 to 377; that stretch reads GISTAIIGRP…IEERINNLFF (155 aa). Asparagine 233 is a binding site for K(+). Residues 233–238, 252–258, and 277–280 contribute to the GTP site; these read NVGKSS, TDIAGTT, and DTAG. Residue serine 237 coordinates Mg(2+). The K(+) site is built by threonine 252, isoleucine 254, and threonine 257. Threonine 258 provides a ligand contact to Mg(2+). A (6S)-5-formyl-5,6,7,8-tetrahydrofolate-binding site is contributed by lysine 457.

It belongs to the TRAFAC class TrmE-Era-EngA-EngB-Septin-like GTPase superfamily. TrmE GTPase family. As to quaternary structure, homodimer. Heterotetramer of two MnmE and two MnmG subunits. The cofactor is K(+).

The protein localises to the cytoplasm. In terms of biological role, exhibits a very high intrinsic GTPase hydrolysis rate. Involved in the addition of a carboxymethylaminomethyl (cmnm) group at the wobble position (U34) of certain tRNAs, forming tRNA-cmnm(5)s(2)U34. In Streptococcus pneumoniae serotype 2 (strain D39 / NCTC 7466), this protein is tRNA modification GTPase MnmE.